A 219-amino-acid chain; its full sequence is 2-hydroxy-3-keto-5-methylthiopentenyl-1-phosphate phosphatase (219 aa).

This sequence belongs to the HAD-like hydrolase superfamily. MtnX family.

It catalyses the reaction 2-hydroxy-5-methylsulfanyl-3-oxopent-1-enyl phosphate + H2O = 1,2-dihydroxy-5-(methylsulfanyl)pent-1-en-3-one + phosphate. The protein operates within amino-acid biosynthesis; L-methionine biosynthesis via salvage pathway; L-methionine from S-methyl-5-thio-alpha-D-ribose 1-phosphate: step 4/6. Its function is as follows. Dephosphorylates 2-hydroxy-3-keto-5-methylthiopentenyl-1-phosphate (HK-MTPenyl-1-P) yielding 1,2-dihydroxy-3-keto-5-methylthiopentene (DHK-MTPene). The polypeptide is 2-hydroxy-3-keto-5-methylthiopentenyl-1-phosphate phosphatase (Bacillus cereus (strain ATCC 10987 / NRS 248)).